The primary structure comprises 357 residues: Inositol-tetrakisphosphate 1-kinase 3 (357 aa).

Residues Lys-56 and Lys-98 each coordinate 1D-myo-inositol 1,3,4-trisphosphate. 2 residues coordinate ATP: Arg-133 and Lys-183. The 1D-myo-inositol 1,3,4-trisphosphate site is built by His-190 and Lys-222. Residues 211–222, Ser-237, and Ser-262 each bind ATP; that span reads QEFVNHGGVLFK. Asp-302, Asp-317, and Asn-319 together coordinate Mg(2+). Residue Asn-319 coordinates 1D-myo-inositol 1,3,4-trisphosphate.

Belongs to the ITPK1 family. As to quaternary structure, monomer. The cofactor is Mg(2+).

It catalyses the reaction 1D-myo-inositol 3,4,5,6-tetrakisphosphate + ATP = 1D-myo-inositol 1,3,4,5,6-pentakisphosphate + ADP + H(+). The enzyme catalyses 1D-myo-inositol 1,3,4-trisphosphate + ATP = 1D-myo-inositol 1,3,4,5-tetrakisphosphate + ADP + H(+). The catalysed reaction is 1D-myo-inositol 1,3,4-trisphosphate + ATP = 1D-myo-inositol 1,3,4,6-tetrakisphosphate + ADP + H(+). In terms of biological role, kinase that can phosphorylate various inositol polyphosphate such as Ins(3,4,5,6)P4 or Ins(1,3,4)P3 and participates in phytic acid biosynthesis in developing seeds. Phytic acid is the primary storage form of phosphorus in cereal grains and other plant seeds. This is Inositol-tetrakisphosphate 1-kinase 3 (ITPK3) from Oryza sativa subsp. indica (Rice).